We begin with the raw amino-acid sequence, 262 residues long: MAPRSLFLQRFQPRDLTKAWNQLNLFDEIQFAFLIYSQVYSKTLMDFQKRWAQGVLDLEENAPPVVILKQLAHLLKNKVCYHPPMLVDHPDLARENDRHVFVYLSREKMQKVLEEKSITFGLEAVLATTMQPYRSDLVLQEMVRAHNIAWPHRRVEEPDLEGFIAIFASTLFIHLLELKVTNVYGREVACTFFVRQGTGNRSYDVIACGITQFTKNAGVMPRPAVPSPEPDLTLRLSGPNQKREEGDMKPAIVNLKKETSAT.

The interval 221–262 (PRPAVPSPEPDLTLRLSGPNQKREEGDMKPAIVNLKKETSAT) is disordered.

The catalysed reaction is O-phospho-L-tyrosyl-[protein] + H2O = L-tyrosyl-[protein] + phosphate. Functionally, induces differentiation and growth of neoplastic roots (hairy roots). Seems to function as a tyrosine phosphatase. This Rhizobium rhizogenes (Agrobacterium rhizogenes) protein is Protein-tyrosine phosphatase RolB (rolB).